The sequence spans 1030 residues: MRENYETLVSVGTAELLPLSAFLSPSEPGRAVGGGSHADEGQEPAGCGDPQGGQPRHSLHLTALVQLVKEIPEFLFGEVKGAMDSPESESRGASLDGERASPEAAAAREPCPLRGLLSCLPDGPTSQPHLATTPTDSSCSSGPTGDGVQGSPLPIKTADKPWPTRKEGPGALGGEPSPPTHSPSRRKSHRGQERGTSEAGISPGNSPLQGLINCLKEILVPGPRHPETSPSFLPPLPSLGTSRLTRADLGPGSPPWAVKTEAVSGDCPLQGLLHCLKELPEAQDRHPSPSGVGNRRLQENPGAWKRGSGGPGYLLTPPPHPDLGAGGLLSVKMENSWVQSPPGPASCQPGRQPLSPSATGDTRGVPQPSWGPEAQAASASSSPLEALEACLKGIPPNGSSPSQLPPTSCSQNPQPGDSRSQKPELQPHRSHSEEATREPVLPLGLQSCVRDGPSRPLAPRGTPTSFSSSSSTDWDLDFGSPVGNQGQHPGKGSPPGSSPLQGLENCLKEIPVPVLRPAWPCSSAADRGPRRAEPRNWTADKEGLRAEACESARLGQGRGEAPTRSLHLVSPQVFTSSCVPACHQRGFKDPGATRPGVWRWLPEGSAPKPSPLHCLESALRGILPVRPLRFACVGGPSPSPSPGSSSSFSGSEGEDPRPEPDLWKPLPQERDRLPSCKPPVPLSPCPGGTPAGSSGGSPGEDPRRTEPRYCSGLGAGTAQDPCPVSQLEKRPRVSEASRGLELGHGRPRVAAKTHERLLPQGPPELPSESPPPELPPPEAAPPVLPASSLQPPCHCGKPLQQELHSLGAALAEKLDRLATALAGLAQEVATMRTQVNRLGRRPQGPGPMGQASWMWTLPRGPRWAHGPGHRHLPYWRQKGPTRPKPKILRGQGESCRAGDLQGLSRGTARRARPLPPDAPPAEPPGLHCSSSQQLLSSTPSCHAAPPAHPLLAHTGGHQSPLPPLVPAALPLQGASPPAASADADVPTSGVAPDGIPERPKEPSSLLGGVQRALQEELWGGEHRDPRWGAH.

Disordered regions lie at residues 27–56 (EPGRAVGGGSHADEGQEPAGCGDPQGGQPR), 80–208 (KGAM…NSPL), 225–255 (HPETSPSFLPPLPSLGTSRLTRADLGPGSPP), 281–505 (EAQD…GLEN), and 634–788 (GGPS…PASS). A Phosphoserine modification is found at Ser-101. A compositionally biased stretch (low complexity) spans 102 to 114 (PEAAAAREPCPLR). A compositionally biased stretch (polar residues) spans 124–143 (PTSQPHLATTPTDSSCSSGP). Positions 157–168 (TADKPWPTRKEG) are enriched in basic and acidic residues. A phosphoserine mark is found at Ser-177, Ser-182, Ser-184, Ser-229, Ser-253, and Ser-355. The span at 372 to 389 (PEAQAASASSSPLEALEA) shows a compositional bias: low complexity. Positions 397-418 (NGSSPSQLPPTSCSQNPQPGDS) are enriched in polar residues. Basic and acidic residues predominate over residues 419–437 (RSQKPELQPHRSHSEEATR). 2 stretches are compositionally biased toward low complexity: residues 485 to 502 (QGQHPGKGSPPGSSPLQG) and 642 to 651 (PGSSSSFSGS). Residues 654-674 (EDPRPEPDLWKPLPQERDRLP) are compositionally biased toward basic and acidic residues. Residues 689–698 (TPAGSSGGSP) show a composition bias toward gly residues. Residues 760-784 (QGPPELPSESPPPELPPPEAAPPVL) are compositionally biased toward pro residues. The stretch at 799–832 (LQQELHSLGAALAEKLDRLATALAGLAQEVATMR) forms a coiled coil. A compositionally biased stretch (basic residues) spans 870-887 (RHLPYWRQKGPTRPKPKI). Positions 870 to 1030 (RHLPYWRQKG…EHRDPRWGAH (161 aa)) are disordered. A compositionally biased stretch (pro residues) spans 913–923 (PLPPDAPPAEP). Low complexity-rich tracts occupy residues 929–953 (SSSQQLLSSTPSCHAAPPAHPLLAH) and 966–984 (PAALPLQGASPPAASADAD). Residues 1019–1030 (GGEHRDPRWGAH) are compositionally biased toward basic and acidic residues.

As to expression, expressed in brain (cerebellum).

In Homo sapiens (Human), this protein is Protein KRBA1 (KRBA1).